Here is a 116-residue protein sequence, read N- to C-terminus: MGTMHTSELLKHIYDINLSYLLLAQRLIVQDKASAMFRLGINEEMANTLGALTLPQMVKLAETNQLVCHFRFDDHQTITRLTQDSRVDDLQQIHTGIMLSTRLLNEADETARKKRA.

It belongs to the FlhD family. In terms of assembly, homodimer; disulfide-linked. Forms a heterohexamer composed of two FlhC and four FlhD subunits. Each FlhC binds a FlhD dimer, forming a heterotrimer, and a hexamer assembles by dimerization of two heterotrimers.

The protein localises to the cytoplasm. Functions in complex with FlhC as a master transcriptional regulator that regulates transcription of several flagellar and non-flagellar operons by binding to their promoter region. Activates expression of class 2 flagellar genes, including fliA, which is a flagellum-specific sigma factor that turns on the class 3 genes. Also regulates genes whose products function in a variety of physiological pathways. The chain is Flagellar transcriptional regulator FlhD from Salmonella arizonae (strain ATCC BAA-731 / CDC346-86 / RSK2980).